The primary structure comprises 68 residues: Protein SlyX homolog (68 aa).

It belongs to the SlyX family.

The chain is Protein SlyX homolog from Pseudomonas fluorescens (strain SBW25).